The following is a 454-amino-acid chain: Bifunctional protein GlmU (454 aa).

The segment at 1–228 (MNKCAIILAA…FEETLGVNSR (228 aa)) is pyrophosphorylase. UDP-N-acetyl-alpha-D-glucosamine is bound by residues 8 to 11 (LAAG), K22, Q73, and 78 to 79 (GT). Residue D103 participates in Mg(2+) binding. UDP-N-acetyl-alpha-D-glucosamine-binding residues include G140, E154, N169, and N226. Residue N226 participates in Mg(2+) binding. Positions 229 to 249 (AELAKVESIMRNRINRTHLDN) are linker. The N-acetyltransferase stretch occupies residues 250–454 (GVTIIDPLNT…EGWVERKKLK (205 aa)). R331 and K349 together coordinate UDP-N-acetyl-alpha-D-glucosamine. The active-site Proton acceptor is H361. The UDP-N-acetyl-alpha-D-glucosamine site is built by Y364 and N375. Residues 384 to 385 (NY), A421, and R438 contribute to the acetyl-CoA site.

It in the N-terminal section; belongs to the N-acetylglucosamine-1-phosphate uridyltransferase family. This sequence in the C-terminal section; belongs to the transferase hexapeptide repeat family. As to quaternary structure, homotrimer. The cofactor is Mg(2+).

It is found in the cytoplasm. The catalysed reaction is alpha-D-glucosamine 1-phosphate + acetyl-CoA = N-acetyl-alpha-D-glucosamine 1-phosphate + CoA + H(+). It catalyses the reaction N-acetyl-alpha-D-glucosamine 1-phosphate + UTP + H(+) = UDP-N-acetyl-alpha-D-glucosamine + diphosphate. The protein operates within nucleotide-sugar biosynthesis; UDP-N-acetyl-alpha-D-glucosamine biosynthesis; N-acetyl-alpha-D-glucosamine 1-phosphate from alpha-D-glucosamine 6-phosphate (route II): step 2/2. It participates in nucleotide-sugar biosynthesis; UDP-N-acetyl-alpha-D-glucosamine biosynthesis; UDP-N-acetyl-alpha-D-glucosamine from N-acetyl-alpha-D-glucosamine 1-phosphate: step 1/1. Its pathway is bacterial outer membrane biogenesis; LPS lipid A biosynthesis. Catalyzes the last two sequential reactions in the de novo biosynthetic pathway for UDP-N-acetylglucosamine (UDP-GlcNAc). The C-terminal domain catalyzes the transfer of acetyl group from acetyl coenzyme A to glucosamine-1-phosphate (GlcN-1-P) to produce N-acetylglucosamine-1-phosphate (GlcNAc-1-P), which is converted into UDP-GlcNAc by the transfer of uridine 5-monophosphate (from uridine 5-triphosphate), a reaction catalyzed by the N-terminal domain. The sequence is that of Bifunctional protein GlmU from Clostridium perfringens (strain SM101 / Type A).